Here is a 231-residue protein sequence, read N- to C-terminus: Response regulator Rre1 (231 aa).

The region spanning 6–123 (SLLLVDDEPG…ELEAIVRNLL (118 aa)) is the Response regulatory domain. Aspartate 56 bears the 4-aspartylphosphate mark. The HTH luxR-type domain maps to 163 to 228 (PSPIKLDFTP…ELVRFALQHG (66 aa)). The segment at residues 187 to 206 (NKEIAAQLKTSVRNVEKYVS) is a DNA-binding region (H-T-H motif).

In terms of assembly, interacts with histidine kinase Hik2; may accept phosphate from Hik2.

Its function is as follows. Member of at least 2 two-component regulatory systems Hik2/Rre1 and Hik34/Rre1. Responds to hyperosmotic stress, regulates expression of at least 24 genes including dnaK2 and hspA with Hik34 and sigB (sll0306), sll0528, slr1119, slr0852 and ssr3188 with Hik2. Responds to salt stress, regulates expression of at least 24 genes including adhA, dnaK2 and hspA with Hik34. Binds the adhA promoter. Phosphorylated by Hik2 in vitro. Phosphorylated protein has 10-fold higher affinity for DNA than unphosphorylated protein. The chain is Response regulator Rre1 from Synechocystis sp. (strain ATCC 27184 / PCC 6803 / Kazusa).